The following is a 261-amino-acid chain: Transcription repressor OFP15 (261 aa).

Residues 1–28 are disordered; that stretch reads MKLPFLNKNHSTSSYSSNSSSSSWPWPS. The segment covering 11-28 has biased composition (low complexity); sequence STSSYSSNSSSSSWPWPS. One can recognise an OVATE domain in the interval 112–172; sequence FSLESDDPYS…FAAFVDLLMN (61 aa).

Interacts with BLH1 and BLH3. As to expression, expressed in roots, cauline leaves, shoots, flower buds and siliques.

It is found in the nucleus. Functionally, transcriptional repressor that regulates multiple aspects of plant growth and development through the regulation of BEL1-LIKE (BLH) and KNOX TALE (KNAT) homeodomain transcription factors. In Arabidopsis thaliana (Mouse-ear cress), this protein is Transcription repressor OFP15 (OFP15).